The following is a 317-amino-acid chain: Transmembrane and death domain protein 1 (317 aa).

A signal peptide spans 1–27 (MAARTLASALVLTLWVWALAPAGAVDA). Topologically, residues 28–218 (MGPHAAVRLA…ERSPMGWAGP (191 aa)) are extracellular. The segment covering 62-73 (ELSRLSEDRLAR) has biased composition (basic and acidic residues). The interval 62-106 (ELSRLSEDRLARPEPLNTTSGSPSRRRRREAAEDPAGRVAGPGEV) is disordered. The Death domain occupies 66 to 150 (LSEDRLARPE…DVARELGKNL (85 aa)). N78 is a glycosylation site (N-linked (GlcNAc...) asparagine). The chain crosses the membrane as a helical span at residues 219-239 (LALGLLTGFVGALGTGALVVL). Residues 240-317 (LTLWITGGDG…SWGSGALDGL (78 aa)) are Cytoplasmic-facing.

The protein resides in the membrane. This Homo sapiens (Human) protein is Transmembrane and death domain protein 1.